A 227-amino-acid polypeptide reads, in one-letter code: MDQNALKEQTGKESVKYIKSGMIVGLGTGSTVKYMVDELGKQVQEGKIKDIIGVTTSNRTAKQARDLGITIKDIDDVDHIDLTIDGADEISDDFQGIKGGGGALLWEKIVANASNKVMWIVDESKLVHKLGAFPLPVEVIPFGSQHVFDRLEKKGYKPTWRMDGDKKFRTDENNYIIDLHLGEIDDPKALADELIHMVGIVETGLFLNRVNDVIVGTPEGPKVLHAR.

Residues 28-31 (TGST), 85-88 (DGAD), and 98-101 (KGGG) each bind substrate. Glu107 (proton acceptor) is an active-site residue. Residue Lys125 coordinates substrate.

This sequence belongs to the ribose 5-phosphate isomerase family. As to quaternary structure, homodimer.

It carries out the reaction aldehydo-D-ribose 5-phosphate = D-ribulose 5-phosphate. It functions in the pathway carbohydrate degradation; pentose phosphate pathway; D-ribose 5-phosphate from D-ribulose 5-phosphate (non-oxidative stage): step 1/1. Catalyzes the reversible conversion of ribose-5-phosphate to ribulose 5-phosphate. In Limosilactobacillus reuteri (strain DSM 20016) (Lactobacillus reuteri), this protein is Ribose-5-phosphate isomerase A.